A 228-amino-acid chain; its full sequence is Sugar fermentation stimulation protein homolog (228 aa).

Belongs to the SfsA family.

This is Sugar fermentation stimulation protein homolog from Desulfitobacterium hafniense (strain Y51).